The chain runs to 63 residues: Large ribosomal subunit protein uL29 (63 aa).

It belongs to the universal ribosomal protein uL29 family.

The chain is Large ribosomal subunit protein uL29 from Pectobacterium carotovorum subsp. carotovorum (strain PC1).